A 247-amino-acid chain; its full sequence is MyoD family inhibitor domain-containing protein (247 aa).

Disordered stretches follow at residues 1–67 (MSCA…NPSA) and 80–110 (QLQT…GNGI). Positions 74-247 (QPERLPQLQT…MECCGICFPS (174 aa)) constitute an MDFI domain. Phosphoserine is present on residues Ser-129 and Ser-141.

This sequence belongs to the MDFI family. As to quaternary structure, interacts with HAND1; the interaction sequesters Hand1 into the nucleolus and inhibits its activity. Interacts (via C-terminus) with ZIC2. Interacts (via C-terminus) with AXIN1, the histidine-rich region of CCNT1/cyclin-T and weakly with LEF1. Interacts with CCNT2. Interacts with GATA2. Interacts (via C-terminus) with Piezo channel composed of PIEZO1 or PIEZO2; the interaction prolongs Piezo channel inactivation. Post-translationally, palmitoylated. In terms of tissue distribution, in the embryo, robust expression is detected between 16.5 and 18.5 dpc in lung, kidney, and salivary glands. In the developing cardiovascular system, it is detected in lymphatic and cardiac valves (at protein level).

The protein localises to the cytoplasm. The protein resides in the secreted. In terms of biological role, required to control the activity of various transcription factors through their sequestration in the cytoplasm. Retains nuclear Zic proteins ZIC1, ZIC2 and ZIC3 in the cytoplasm and inhibits their transcriptional activation. Modulates the expression from cellular promoters. Binds to the axin complex, resulting in an increase in the level of free beta-catenin. Affects axin-regulation of the WNT and JNK signaling pathways. Involved in the development of lymphatic vessel valves. Required to promote lymphatic endothelial cell migration, in a process that involves down-regulation of integrin beta 1 activation and control of cell adhesion to the extracellular matrix. Regulates the activity of mechanosensitive Piezo channel. This Mus musculus (Mouse) protein is MyoD family inhibitor domain-containing protein.